Reading from the N-terminus, the 406-residue chain is tRNA-specific 2-thiouridylase MnmA (406 aa).

Residues 42–49 and leucine 68 contribute to the ATP site; that span reads GLSGGVDS. Catalysis depends on cysteine 129, which acts as the Nucleophile. A disulfide bond links cysteine 129 and cysteine 237. Residue glycine 154 coordinates ATP. Residues 187–189 form an interaction with tRNA region; that stretch reads KDQ. Cysteine 237 acts as the Cysteine persulfide intermediate in catalysis. Residues 342–343 are interaction with tRNA; it reads RY.

The protein belongs to the MnmA/TRMU family.

It localises to the cytoplasm. The catalysed reaction is S-sulfanyl-L-cysteinyl-[protein] + uridine(34) in tRNA + AH2 + ATP = 2-thiouridine(34) in tRNA + L-cysteinyl-[protein] + A + AMP + diphosphate + H(+). In terms of biological role, catalyzes the 2-thiolation of uridine at the wobble position (U34) of tRNA, leading to the formation of s(2)U34. The chain is tRNA-specific 2-thiouridylase MnmA from Prochlorococcus marinus (strain MIT 9211).